The sequence spans 107 residues: uncharacterized protein (107 aa).

The next 3 membrane-spanning stretches (helical) occupy residues 20 to 40, 49 to 69, and 86 to 106; these read FISLISSSTSELPLFVVEVGI, PAILSILVLNALEVSSFISTV, and VVMLKILAFLLLEGIIIKLFL.

It localises to the membrane. This is an uncharacterized protein from Saccharomyces cerevisiae (strain ATCC 204508 / S288c) (Baker's yeast).